The sequence spans 261 residues: Putative hydro-lyase Sfum_3393 (261 aa).

Belongs to the D-glutamate cyclase family.

The polypeptide is Putative hydro-lyase Sfum_3393 (Syntrophobacter fumaroxidans (strain DSM 10017 / MPOB)).